The chain runs to 241 residues: Protein GrpE (241 aa).

Residues 28 to 49 (QNCQKEETQTTNKDNQKEDETF) are compositionally biased toward basic and acidic residues. Residues 28–78 (QNCQKEETQTTNKDNQKEDETFKNQPNKTKQTNTKQQKHLSKESSHQQITK) are disordered. The span at 50–62 (KNQPNKTKQTNTK) shows a compositional bias: low complexity.

Belongs to the GrpE family. As to quaternary structure, homodimer.

Its subcellular location is the cytoplasm. Functionally, participates actively in the response to hyperosmotic and heat shock by preventing the aggregation of stress-denatured proteins, in association with DnaK and GrpE. It is the nucleotide exchange factor for DnaK and may function as a thermosensor. Unfolded proteins bind initially to DnaJ; upon interaction with the DnaJ-bound protein, DnaK hydrolyzes its bound ATP, resulting in the formation of a stable complex. GrpE releases ADP from DnaK; ATP binding to DnaK triggers the release of the substrate protein, thus completing the reaction cycle. Several rounds of ATP-dependent interactions between DnaJ, DnaK and GrpE are required for fully efficient folding. The sequence is that of Protein GrpE from Aster yellows witches'-broom phytoplasma (strain AYWB).